We begin with the raw amino-acid sequence, 56 residues long: Large ribosomal subunit protein bL33 (56 aa).

Belongs to the bacterial ribosomal protein bL33 family.

The protein is Large ribosomal subunit protein bL33 of Haemophilus influenzae (strain 86-028NP).